Here is a 189-residue protein sequence, read N- to C-terminus: uncharacterized protein (189 aa).

The first 23 residues, 1–23 (MVPPKPALWALLLALLGTAPSRA), serve as a signal peptide directing secretion. N-linked (GlcNAc...) asparagine glycosylation is present at Asn72.

This is an uncharacterized protein from Homo sapiens (Human).